The chain runs to 366 residues: NADP-dependent oxidoreductase domain-containing protein 1 (366 aa).

Belongs to the pyrroline-5-carboxylate reductase family.

Its function is as follows. Probable oxidoreductase. In Mus musculus (Mouse), this protein is NADP-dependent oxidoreductase domain-containing protein 1 (Noxred1).